The following is a 387-amino-acid chain: Phosphoglycerate kinase (387 aa).

Substrate-binding positions include 21–23, Arg-36, 59–62, Arg-113, and Arg-146; these read DLN and HLGR. ATP-binding positions include Lys-197, Glu-314, and 340 to 343; that span reads GGDT.

The protein belongs to the phosphoglycerate kinase family. Monomer.

It is found in the cytoplasm. The catalysed reaction is (2R)-3-phosphoglycerate + ATP = (2R)-3-phospho-glyceroyl phosphate + ADP. Its pathway is carbohydrate degradation; glycolysis; pyruvate from D-glyceraldehyde 3-phosphate: step 2/5. The protein is Phosphoglycerate kinase of Klebsiella pneumoniae (strain 342).